The sequence spans 689 residues: Glycine--tRNA ligase beta subunit (689 aa).

The protein belongs to the class-II aminoacyl-tRNA synthetase family. Tetramer of two alpha and two beta subunits.

Its subcellular location is the cytoplasm. It carries out the reaction tRNA(Gly) + glycine + ATP = glycyl-tRNA(Gly) + AMP + diphosphate. This chain is Glycine--tRNA ligase beta subunit, found in Cronobacter sakazakii (strain ATCC BAA-894) (Enterobacter sakazakii).